Here is a 54-residue protein sequence, read N- to C-terminus: Large ribosomal subunit protein bL33 (54 aa).

The protein belongs to the bacterial ribosomal protein bL33 family.

This chain is Large ribosomal subunit protein bL33, found in Corynebacterium glutamicum (strain R).